Reading from the N-terminus, the 339-residue chain is Ferrochelatase (339 aa).

His-202 and Glu-283 together coordinate Fe cation.

Belongs to the ferrochelatase family.

It is found in the cytoplasm. The catalysed reaction is heme b + 2 H(+) = protoporphyrin IX + Fe(2+). The protein operates within porphyrin-containing compound metabolism; protoheme biosynthesis; protoheme from protoporphyrin-IX: step 1/1. Catalyzes the ferrous insertion into protoporphyrin IX. In Psychrobacter arcticus (strain DSM 17307 / VKM B-2377 / 273-4), this protein is Ferrochelatase.